The chain runs to 238 residues: uncharacterized protein (238 aa).

Belongs to the chlamydial CPn_0658/CT_538/TC_0825 family.

This is an uncharacterized protein from Chlamydia muridarum (strain MoPn / Nigg).